Consider the following 382-residue polypeptide: D-galactonate dehydratase (382 aa).

D183 serves as a coordination point for Mg(2+). H185 acts as the Proton donor in catalysis. The Mg(2+) site is built by E209 and E235. H285 serves as the catalytic Proton acceptor.

Belongs to the mandelate racemase/muconate lactonizing enzyme family. GalD subfamily. The cofactor is Mg(2+).

The enzyme catalyses D-galactonate = 2-dehydro-3-deoxy-D-galactonate + H2O. It functions in the pathway carbohydrate acid metabolism; D-galactonate degradation; D-glyceraldehyde 3-phosphate and pyruvate from D-galactonate: step 1/3. In terms of biological role, catalyzes the dehydration of D-galactonate to 2-keto-3-deoxy-D-galactonate. This chain is D-galactonate dehydratase, found in Ralstonia nicotianae (strain ATCC BAA-1114 / GMI1000) (Ralstonia solanacearum).